Reading from the N-terminus, the 440-residue chain is Suppressor of cytokine signaling 4 (440 aa).

Residues 1–10 (MAENNENISK) are compositionally biased toward polar residues. The tract at residues 1–29 (MAENNENISKNVDVRPKTSRSRSADRKDG) is disordered. Residues 12–29 (VDVRPKTSRSRSADRKDG) show a composition bias toward basic and acidic residues. Residues 286 to 381 (CYWGVMDKYA…FFEPLLSTPL (96 aa)) form the SH2 domain. The region spanning 376–425 (LLSTPLIRTFPFSLQHICRTVICNCTTYDGIDALPIPSSMKLYLKEYHYK) is the SOCS box domain.

The protein operates within protein modification; protein ubiquitination. Functionally, SOCS family proteins form part of a classical negative feedback system that regulates cytokine signal transduction. Substrate-recognition component of a SCF-like ECS (Elongin BC-CUL2/5-SOCS-box protein) E3 ubiquitin-protein ligase complex which mediates the ubiquitination and subsequent proteasomal degradation of target proteins. Inhibits EGF signaling by mediating the degradation of the Tyr-phosphorylated EGF receptor/EGFR. This Homo sapiens (Human) protein is Suppressor of cytokine signaling 4 (SOCS4).